Reading from the N-terminus, the 1383-residue chain is Putative autophagy-related protein 11 (1383 aa).

2 coiled-coil regions span residues 16–49 (DKNN…YELN) and 117–324 (NLFL…QNKE). Basic and acidic residues-rich tracts occupy residues 1151 to 1224 (EEEK…EDRK) and 1233 to 1249 (HSSD…KTKE). The tract at residues 1151-1249 (EEEKKKNEEE…KYNKKEKTKE (99 aa)) is disordered.

It belongs to the ATG11 family.

In terms of biological role, involved in cytoplasm to vacuole transport (Cvt), pexophagy, mitophagy and nucleophagy. Works as scaffold proteins that recruit ATG proteins to the pre-autophagosome (PAS), the site of vesicle/autophagosome formation. This chain is Putative autophagy-related protein 11, found in Plasmodium falciparum (isolate 3D7).